The sequence spans 179 residues: Protein GrpE (179 aa).

Basic and acidic residues predominate over residues 1 to 10; the sequence is MSKKEEKQEE. A disordered region spans residues 1–23; that stretch reads MSKKEEKQEELQEEMEAVDAAGV.

This sequence belongs to the GrpE family. Homodimer.

The protein localises to the cytoplasm. Its function is as follows. Participates actively in the response to hyperosmotic and heat shock by preventing the aggregation of stress-denatured proteins, in association with DnaK and GrpE. It is the nucleotide exchange factor for DnaK and may function as a thermosensor. Unfolded proteins bind initially to DnaJ; upon interaction with the DnaJ-bound protein, DnaK hydrolyzes its bound ATP, resulting in the formation of a stable complex. GrpE releases ADP from DnaK; ATP binding to DnaK triggers the release of the substrate protein, thus completing the reaction cycle. Several rounds of ATP-dependent interactions between DnaJ, DnaK and GrpE are required for fully efficient folding. The polypeptide is Protein GrpE (Enterococcus faecalis (strain ATCC 700802 / V583)).